Reading from the N-terminus, the 471-residue chain is Probable lysophospholipase BODYGUARD 2 (471 aa).

The first 45 residues, 1 to 45, serve as a signal peptide directing secretion; that stretch reads MGIARWLNRTVGFFVFALLDIADFLLCYTYKTLDYFLESERKPCY. A lipid anchor (N-palmitoyl cysteine) is attached at Cys46. An AB hydrolase-1 domain is found at 193 to 296; that stretch reads VVFIHGFVSS…AIKSLTLLAP (104 aa). His197 is a catalytic residue. Ser271 serves as the catalytic Nucleophile. Residues Asp418 and His446 each act as charge relay system in the active site.

The protein localises to the cell membrane. Its subcellular location is the secreted. It localises to the cell wall. Its function is as follows. Involved in cuticle development and morphogenesis. The chain is Probable lysophospholipase BODYGUARD 2 from Arabidopsis thaliana (Mouse-ear cress).